A 122-amino-acid chain; its full sequence is Large ribosomal subunit protein uL14 (122 aa).

Belongs to the universal ribosomal protein uL14 family. Part of the 50S ribosomal subunit. Forms a cluster with proteins L3 and L19. In the 70S ribosome, L14 and L19 interact and together make contacts with the 16S rRNA in bridges B5 and B8.

Binds to 23S rRNA. Forms part of two intersubunit bridges in the 70S ribosome. This chain is Large ribosomal subunit protein uL14, found in Thiobacillus denitrificans (strain ATCC 25259 / T1).